The sequence spans 502 residues: 4,4'-diaponeurosporene oxygenase (502 aa).

8–20 (IIGGGLGGISAAI) provides a ligand contact to FAD.

The protein belongs to the carotenoid/retinoid oxidoreductase family. CrtP subfamily. Requires FAD as cofactor.

The enzyme catalyses all-trans-4,4'-diaponeurosporene + 2 AH2 + 2 O2 = 4,4'-diaponeurosporenal + 2 A + 3 H2O. It functions in the pathway carotenoid biosynthesis; staphyloxanthin biosynthesis; staphyloxanthin from farnesyl diphosphate: step 3/5. Involved in the biosynthesis of the yellow-orange carotenoid staphyloxanthin, which plays a role in the virulence via its protective function against oxidative stress. Catalyzes the oxidation of the terminal methyl side group of 4,4'-diaponeurosporene to form 4,4'-diaponeurosporen-4-al. The chain is 4,4'-diaponeurosporene oxygenase from Staphylococcus haemolyticus (strain JCSC1435).